Consider the following 1280-residue polypeptide: Clustered mitochondria protein homolog (1280 aa).

Over residues 1–27 the composition is skewed to polar residues; that stretch reads MAASSNDASKSAMANSNVTTEVAQTPS. Disordered regions lie at residues 1–49 and 169–189; these read MAAS…GQLP and GLDQ…LADY. The segment covering 32–43 has biased composition (acidic residues); the sequence is VNGEVEATEEDG. The Clu domain occupies 338–582; that stretch reads DLARTQESYL…RLTPLDVAWI (245 aa). Disordered regions lie at residues 633 to 669, 905 to 943, and 1214 to 1280; these read KANK…EPEQ, GAAV…AVSL, and TGRN…TQKP. The segment covering 635–648 has biased composition (basic residues); sequence NKARGGRRRLPKAQ. Residues 649–669 are compositionally biased toward basic and acidic residues; it reads KKADAGKEVDGEKKAEAEPEQ. Residues 1221–1235 show a composition bias toward low complexity; that stretch reads PAAATPSVSDAAAAA. Over residues 1245 to 1261 the composition is skewed to basic and acidic residues; it reads VDQRKIEDLLKYIEGES. The segment covering 1265-1280 has biased composition (basic residues); sequence PTKKRTQNPRKRTQKP.

This sequence belongs to the CLU family. As to quaternary structure, may associate with the eukaryotic translation initiation factor 3 (eIF-3) complex.

Its subcellular location is the cytoplasm. Its function is as follows. mRNA-binding protein involved in proper cytoplasmic distribution of mitochondria. This Phaeosphaeria nodorum (strain SN15 / ATCC MYA-4574 / FGSC 10173) (Glume blotch fungus) protein is Clustered mitochondria protein homolog.